A 467-amino-acid chain; its full sequence is Acetyl-CoA decarbonylase/synthase complex subunit beta (467 aa).

Residues cysteine 193, cysteine 196, cysteine 282, and cysteine 284 each coordinate [Ni-Fe-S] cluster. The segment at 403 to 428 (RWAEEEEEEEEKAPEEEAPAEEPTME) is disordered. Acidic residues predominate over residues 405–426 (AEEEEEEEEKAPEEEAPAEEPT).

Belongs to the CdhC family. As to quaternary structure, monomer. The ACDS complex is made up of alpha, epsilon, beta, gamma and delta chains with a probable stoichiometry of (alpha(2)epsilon(2))(4)-beta(8)-(gamma(1)delta(1))(8). Requires [Ni-Fe-S] cluster as cofactor.

It carries out the reaction Co(I)-[corrinoid Fe-S protein] + acetyl-CoA + H(+) = methyl-Co(III)-[corrinoid Fe-S protein] + CO + CoA. Functionally, part of a complex that catalyzes the reversible cleavage of acetyl-CoA, allowing autotrophic growth from CO(2). The alpha-epsilon complex generates CO from CO(2), while the beta subunit (this protein) combines the CO with CoA and a methyl group to form acetyl-CoA. The methyl group, which is incorporated into acetyl-CoA, is transferred to the beta subunit by a corrinoid iron-sulfur protein (the gamma-delta complex). The sequence is that of Acetyl-CoA decarbonylase/synthase complex subunit beta from Methanopyrus kandleri (strain AV19 / DSM 6324 / JCM 9639 / NBRC 100938).